Here is a 292-residue protein sequence, read N- to C-terminus: Probable serine/threonine-protein kinase FPV226 (292 aa).

The Protein kinase domain maps to 14–292 (WKIDKLIGCG…DLLRQLVNSL (279 aa)). Residues 20–28 (IGCGGFGCV) and Lys-43 each bind ATP. The Proton acceptor role is filled by Asp-147.

Belongs to the protein kinase superfamily. Ser/Thr protein kinase family. Poxviruses subfamily.

The catalysed reaction is L-seryl-[protein] + ATP = O-phospho-L-seryl-[protein] + ADP + H(+). The enzyme catalyses L-threonyl-[protein] + ATP = O-phospho-L-threonyl-[protein] + ADP + H(+). The protein is Probable serine/threonine-protein kinase FPV226 of Vertebrata (FPV).